A 152-amino-acid polypeptide reads, in one-letter code: Transcriptional regulator MraZ (152 aa).

SpoVT-AbrB domains follow at residues A5–E52 and A81–A124.

Belongs to the MraZ family. Forms oligomers.

It localises to the cytoplasm. Its subcellular location is the nucleoid. This is Transcriptional regulator MraZ from Shewanella denitrificans (strain OS217 / ATCC BAA-1090 / DSM 15013).